Here is a 219-residue protein sequence, read N- to C-terminus: Ribose-5-phosphate isomerase A (219 aa).

Substrate contacts are provided by residues 28–31 (TGST), 81–84 (DSAD), and 94–97 (KGGG). Catalysis depends on glutamate 103, which acts as the Proton acceptor. Residue lysine 121 participates in substrate binding.

It belongs to the ribose 5-phosphate isomerase family. Homodimer.

It carries out the reaction aldehydo-D-ribose 5-phosphate = D-ribulose 5-phosphate. It participates in carbohydrate degradation; pentose phosphate pathway; D-ribose 5-phosphate from D-ribulose 5-phosphate (non-oxidative stage): step 1/1. Its function is as follows. Catalyzes the reversible conversion of ribose-5-phosphate to ribulose 5-phosphate. This chain is Ribose-5-phosphate isomerase A, found in Buchnera aphidicola subsp. Schizaphis graminum (strain Sg).